We begin with the raw amino-acid sequence, 670 residues long: RxLR effector protein PSR2 (670 aa).

Positions 1–17 (MRLQCVVLFAALTLVAA) are cleaved as a signal peptide. The RxLR-dEER motif lies at 39 to 54 (RLLRPGNPAGKEDEER). Residue Asn57 is glycosylated (N-linked (GlcNAc...) asparagine). One copy of the WY1 repeat lies at 79–126 (KLLKWADAKKPPETVFTRLRLDKTGTQLFDNTDFPVWAAYTRSVAQTD). Residues 79–670 (KLLKWADAKK…YSAKFKVRWG (592 aa)) form a 7 X 93 AA tandem repeats region. Residues 127 to 217 (SEASAVMLKT…NYMKLSNKEN (91 aa)) form an LWY2 repeat. One copy of the LWY3 repeat lies at 218–308 (PKAQTTLIAT…KYINYYNKEN (91 aa)). Residues 309–399 (PDEKTTVLAK…KYTENFNLNK (91 aa)) form an LWY4 repeat. One copy of the LWY5 repeat lies at 400-492 (EINEQVTAIQ…KFLEKYNTAN (93 aa)). The LWY6 repeat unit spans residues 493–583 (PGKEQTMISG…KYLNAFNDKA (91 aa)). Residues 584–670 (PVKKALMIDT…YSAKFKVRWG (87 aa)) form an LWY7 repeat.

The protein belongs to the RxLR effector family. Interacts with host dsRNA-binding protein DRB4.

The protein resides in the secreted. Its subcellular location is the host cell. In terms of biological role, secreted effector that possesses RNA silencing suppression activity by inhibiting the biogenesis of small RNAs in the host plant to promote enhanced susceptibility of host to the pathogen during infection. Interferes with secondary siRNA production by associating with host dsRNA-binding protein DRB4. Inhibits the host salicylic acid pathway during infection. The chain is RxLR effector protein PSR2 from Phytophthora sojae (Soybean stem and root rot agent).